The sequence spans 197 residues: Cytochrome c biogenesis ATP-binding export protein CcmA (197 aa).

Residues 1 to 196 (MSMLSLHQLQ…VIKSAQILQL (196 aa)) form the ABC transporter domain. Residue 35 to 42 (GANGSGKS) participates in ATP binding.

Belongs to the ABC transporter superfamily. CcmA exporter (TC 3.A.1.107) family. The complex is composed of two ATP-binding proteins (CcmA) and two transmembrane proteins (CcmB).

It is found in the cell inner membrane. It carries out the reaction heme b(in) + ATP + H2O = heme b(out) + ADP + phosphate + H(+). Its function is as follows. Part of the ABC transporter complex CcmAB involved in the biogenesis of c-type cytochromes; once thought to export heme, this seems not to be the case, but its exact role is uncertain. Responsible for energy coupling to the transport system. The protein is Cytochrome c biogenesis ATP-binding export protein CcmA of Rickettsia typhi (strain ATCC VR-144 / Wilmington).